A 305-amino-acid chain; its full sequence is Methionyl-tRNA formyltransferase (305 aa).

Residue 110–113 participates in (6S)-5,6,7,8-tetrahydrofolate binding; it reads SLLP.

It belongs to the Fmt family.

It catalyses the reaction L-methionyl-tRNA(fMet) + (6R)-10-formyltetrahydrofolate = N-formyl-L-methionyl-tRNA(fMet) + (6S)-5,6,7,8-tetrahydrofolate + H(+). Functionally, attaches a formyl group to the free amino group of methionyl-tRNA(fMet). The formyl group appears to play a dual role in the initiator identity of N-formylmethionyl-tRNA by promoting its recognition by IF2 and preventing the misappropriation of this tRNA by the elongation apparatus. The sequence is that of Methionyl-tRNA formyltransferase from Ureaplasma parvum serovar 3 (strain ATCC 700970).